The following is a 177-amino-acid chain: ATP synthase subunit delta (177 aa).

It belongs to the ATPase delta chain family. As to quaternary structure, F-type ATPases have 2 components, F(1) - the catalytic core - and F(0) - the membrane proton channel. F(1) has five subunits: alpha(3), beta(3), gamma(1), delta(1), epsilon(1). F(0) has three main subunits: a(1), b(2) and c(10-14). The alpha and beta chains form an alternating ring which encloses part of the gamma chain. F(1) is attached to F(0) by a central stalk formed by the gamma and epsilon chains, while a peripheral stalk is formed by the delta and b chains.

It localises to the cell inner membrane. F(1)F(0) ATP synthase produces ATP from ADP in the presence of a proton or sodium gradient. F-type ATPases consist of two structural domains, F(1) containing the extramembraneous catalytic core and F(0) containing the membrane proton channel, linked together by a central stalk and a peripheral stalk. During catalysis, ATP synthesis in the catalytic domain of F(1) is coupled via a rotary mechanism of the central stalk subunits to proton translocation. Functionally, this protein is part of the stalk that links CF(0) to CF(1). It either transmits conformational changes from CF(0) to CF(1) or is implicated in proton conduction. The sequence is that of ATP synthase subunit delta from Vibrio vulnificus (strain CMCP6).